A 309-amino-acid chain; its full sequence is Type II methyltransferase M.HindIII (309 aa).

This sequence belongs to the N(4)/N(6)-methyltransferase family.

It carries out the reaction a 2'-deoxyadenosine in DNA + S-adenosyl-L-methionine = an N(6)-methyl-2'-deoxyadenosine in DNA + S-adenosyl-L-homocysteine + H(+). Its function is as follows. A beta subtype methylase that recognizes the double-stranded sequence 5'-AAGCTT-3', methylates A-1 on both strands, and protects the DNA from cleavage by the HindIII endonuclease. This Haemophilus influenzae (strain ATCC 51907 / DSM 11121 / KW20 / Rd) protein is Type II methyltransferase M.HindIII.